The sequence spans 219 residues: UPF0502 protein GSU0233 (219 aa).

The protein belongs to the UPF0502 family.

This is UPF0502 protein GSU0233 from Geobacter sulfurreducens (strain ATCC 51573 / DSM 12127 / PCA).